Consider the following 63-residue polypeptide: MSYSGSYYGGLGYGCGGFGGLGYGYSCGCGSFRRLGYGCGYGGYRYSCCHPSCYGGYWSSGFY.

The protein belongs to the KRTAP type 19 family. Interacts with hair keratins.

Functionally, in the hair cortex, hair keratin intermediate filaments are embedded in an interfilamentous matrix, consisting of hair keratin-associated proteins (KRTAP), which are essential for the formation of a rigid and resistant hair shaft through their extensive disulfide bond cross-linking with abundant cysteine residues of hair keratins. The matrix proteins include the high-sulfur and high-glycine-tyrosine keratins. The chain is Keratin-associated protein 19-7 (KRTAP19-7) from Homo sapiens (Human).